A 342-amino-acid chain; its full sequence is L-threonine 3-dehydrogenase (342 aa).

Residue Cys-38 coordinates Zn(2+). Active-site charge relay system residues include Thr-40 and His-43. His-63 and Glu-64 together coordinate Zn(2+). Residues Ile-175, Asp-195, Arg-200, 263 to 265 (LGI), and 287 to 288 (VY) each bind NAD(+).

It belongs to the zinc-containing alcohol dehydrogenase family. Homotetramer. Zn(2+) is required as a cofactor.

It is found in the cytoplasm. It catalyses the reaction L-threonine + NAD(+) = (2S)-2-amino-3-oxobutanoate + NADH + H(+). Its pathway is amino-acid degradation; L-threonine degradation via oxydo-reductase pathway; glycine from L-threonine: step 1/2. Functionally, catalyzes the NAD(+)-dependent oxidation of L-threonine to 2-amino-3-ketobutyrate. The sequence is that of L-threonine 3-dehydrogenase from Ruegeria pomeroyi (strain ATCC 700808 / DSM 15171 / DSS-3) (Silicibacter pomeroyi).